The primary structure comprises 162 residues: MSDKIGLFTGSFDPMTNGHLDIIERASRLFDKLYVGIFFNPHKQGFLPLENRKRGLEKALGHLENVEVVASHDELVVDVAKRLGATCLVRGLRNASDLQYEASFDYYNHQLSSDIETIYLHSRPEHLYISSSGVRELLKFGRDIACYVPESILEEIRNEKKD.

Substrate is bound at residue serine 11. ATP contacts are provided by residues 11-12 (SF) and histidine 19. Residues lysine 43, valine 76, and arginine 90 each coordinate substrate. Residues 91-93 (GLR), glutamate 101, and 126-132 (HLYISSS) contribute to the ATP site.

Belongs to the bacterial CoaD family. Homohexamer. Mg(2+) is required as a cofactor.

The protein resides in the cytoplasm. It catalyses the reaction (R)-4'-phosphopantetheine + ATP + H(+) = 3'-dephospho-CoA + diphosphate. Its pathway is cofactor biosynthesis; coenzyme A biosynthesis; CoA from (R)-pantothenate: step 4/5. Its function is as follows. Reversibly transfers an adenylyl group from ATP to 4'-phosphopantetheine, yielding dephospho-CoA (dPCoA) and pyrophosphate. This Streptococcus pneumoniae (strain JJA) protein is Phosphopantetheine adenylyltransferase.